Here is a 133-residue protein sequence, read N- to C-terminus: Transcription antitermination protein NusB (133 aa).

This sequence belongs to the NusB family.

Involved in transcription antitermination. Required for transcription of ribosomal RNA (rRNA) genes. Binds specifically to the boxA antiterminator sequence of the ribosomal RNA (rrn) operons. The protein is Transcription antitermination protein NusB of Pediococcus pentosaceus (strain ATCC 25745 / CCUG 21536 / LMG 10740 / 183-1w).